Here is an 85-residue protein sequence, read N- to C-terminus: MAGLQGWQLVIIILLAILLFAAPKLPAMARNLGQSMRIFSSEVKQMRTEGKDAKDERSGTGSTAADEPVEGRVVDRDETDPRDQR.

Residues 1 to 21 (MAGLQGWQLVIIILLAILLFA) traverse the membrane as a helical segment. Residues 43–85 (VKQMRTEGKDAKDERSGTGSTAADEPVEGRVVDRDETDPRDQR) are disordered. Basic and acidic residues-rich tracts occupy residues 44–58 (KQMR…DERS) and 69–85 (VEGR…RDQR).

Belongs to the TatA/E family. The Tat system comprises two distinct complexes: a TatABC complex, containing multiple copies of TatA, TatB and TatC subunits, and a separate TatA complex, containing only TatA subunits. Substrates initially bind to the TatABC complex, which probably triggers association of the separate TatA complex to form the active translocon.

The protein localises to the cell membrane. Part of the twin-arginine translocation (Tat) system that transports large folded proteins containing a characteristic twin-arginine motif in their signal peptide across membranes. TatA could form the protein-conducting channel of the Tat system. This chain is Sec-independent protein translocase protein TatA, found in Micrococcus luteus (strain ATCC 4698 / DSM 20030 / JCM 1464 / CCM 169 / CCUG 5858 / IAM 1056 / NBRC 3333 / NCIMB 9278 / NCTC 2665 / VKM Ac-2230) (Micrococcus lysodeikticus).